The sequence spans 197 residues: Holliday junction resolvase RecU (197 aa).

Residues Thr-82, Asp-84, Glu-97, and Gln-116 each coordinate Mg(2+).

Belongs to the RecU family. Mg(2+) is required as a cofactor.

Its subcellular location is the cytoplasm. The enzyme catalyses Endonucleolytic cleavage at a junction such as a reciprocal single-stranded crossover between two homologous DNA duplexes (Holliday junction).. In terms of biological role, endonuclease that resolves Holliday junction intermediates in genetic recombination. Cleaves mobile four-strand junctions by introducing symmetrical nicks in paired strands. Promotes annealing of linear ssDNA with homologous dsDNA. Required for DNA repair, homologous recombination and chromosome segregation. This chain is Holliday junction resolvase RecU, found in Streptococcus mutans serotype c (strain ATCC 700610 / UA159).